Here is a 226-residue protein sequence, read N- to C-terminus: Thiamine-phosphate synthase (226 aa).

4-amino-2-methyl-5-(diphosphooxymethyl)pyrimidine contacts are provided by residues Gln-46–Lys-50 and Asp-83. Mg(2+)-binding residues include Asp-84 and Asp-103. Ser-122 serves as a coordination point for 4-amino-2-methyl-5-(diphosphooxymethyl)pyrimidine. Position 149-151 (Thr-149–Ser-151) interacts with 2-[(2R,5Z)-2-carboxy-4-methylthiazol-5(2H)-ylidene]ethyl phosphate. Lys-152 serves as a coordination point for 4-amino-2-methyl-5-(diphosphooxymethyl)pyrimidine. 2-[(2R,5Z)-2-carboxy-4-methylthiazol-5(2H)-ylidene]ethyl phosphate-binding positions include Gly-181 and Ile-201–Thr-202.

The protein belongs to the thiamine-phosphate synthase family. It depends on Mg(2+) as a cofactor.

The catalysed reaction is 2-[(2R,5Z)-2-carboxy-4-methylthiazol-5(2H)-ylidene]ethyl phosphate + 4-amino-2-methyl-5-(diphosphooxymethyl)pyrimidine + 2 H(+) = thiamine phosphate + CO2 + diphosphate. The enzyme catalyses 2-(2-carboxy-4-methylthiazol-5-yl)ethyl phosphate + 4-amino-2-methyl-5-(diphosphooxymethyl)pyrimidine + 2 H(+) = thiamine phosphate + CO2 + diphosphate. It carries out the reaction 4-methyl-5-(2-phosphooxyethyl)-thiazole + 4-amino-2-methyl-5-(diphosphooxymethyl)pyrimidine + H(+) = thiamine phosphate + diphosphate. It participates in cofactor biosynthesis; thiamine diphosphate biosynthesis; thiamine phosphate from 4-amino-2-methyl-5-diphosphomethylpyrimidine and 4-methyl-5-(2-phosphoethyl)-thiazole: step 1/1. Condenses 4-methyl-5-(beta-hydroxyethyl)thiazole monophosphate (THZ-P) and 2-methyl-4-amino-5-hydroxymethyl pyrimidine pyrophosphate (HMP-PP) to form thiamine monophosphate (TMP). The chain is Thiamine-phosphate synthase from Haemophilus influenzae (strain ATCC 51907 / DSM 11121 / KW20 / Rd).